Consider the following 445-residue polypeptide: Phosphoglucosamine mutase (445 aa).

Ser102 serves as the catalytic Phosphoserine intermediate. The Mg(2+) site is built by Ser102, Asp241, Asp243, and Asp245. Ser102 bears the Phosphoserine mark.

This sequence belongs to the phosphohexose mutase family. Requires Mg(2+) as cofactor. Post-translationally, activated by phosphorylation.

It carries out the reaction alpha-D-glucosamine 1-phosphate = D-glucosamine 6-phosphate. Catalyzes the conversion of glucosamine-6-phosphate to glucosamine-1-phosphate. In Acinetobacter baumannii (strain SDF), this protein is Phosphoglucosamine mutase.